A 180-amino-acid polypeptide reads, in one-letter code: Putative adenylate kinase (180 aa).

ATP is bound by residues Gly-10, Gly-12, Lys-13, Thr-14, and Thr-15. The tract at residues 30–50 (NLRDFALEKGCGREVDGEVEV) is NMP. Residues 99–109 (ERGYSKEKIGE) form an LID region. Residues Arg-100 and Lys-138 each coordinate ATP.

Belongs to the adenylate kinase family. AK6 subfamily. As to quaternary structure, interacts with uS11. Not a structural component of 40S pre-ribosomes, but transiently interacts with them by binding to uS11.

It carries out the reaction AMP + ATP = 2 ADP. It catalyses the reaction ATP + H2O = ADP + phosphate + H(+). In terms of biological role, broad-specificity nucleoside monophosphate (NMP) kinase that catalyzes the reversible transfer of the terminal phosphate group between nucleoside triphosphates and monophosphates. Also has ATPase activity. Involved in the late maturation steps of the 30S ribosomal particles, specifically 16S rRNA maturation. While NMP activity is not required for ribosome maturation, ATPase activity is. Associates transiently with small ribosomal subunit protein uS11. ATP hydrolysis breaks the interaction with uS11. May temporarily remove uS11 from the ribosome to enable a conformational change of the ribosomal RNA that is needed for the final maturation step of the small ribosomal subunit. In Pyrococcus abyssi (strain GE5 / Orsay), this protein is Putative adenylate kinase.